The chain runs to 418 residues: MDQYEILGALGKGSFGVVSKIKRKEDGRVLVWKEICYENMQEKEKQLLVNEVNILQKLKHQNIVRYYDRIIDKPSSRLYIIMEHCSGGDLSQLIKKCRNERTYMDEEVIWRTLLQILSALQEIHNRKDGVILHRDIKPGNLFLDENKNIKLGDFGLAKILNESLYAHTFVGTPYYMSPEQIHGLKYNERSDVWSVGCLIYEMATLSPPFEATNQAQLTSKIQVGRYNPIPSQYSEHLSKVISLMINVDPKSRPNVNELLGYSFISFKVKERKLNIYYQGLKQMDEDLKIKEKKLSDIERDLQVKEQHLLLREQQINQREKLLLDKENFETQSRINIMNQQLQQQQQNQLQHQISNLSLNCNNSVNSCSSSSNNNTTNSINTQQQIHIQHNTQQQQQQQQTFQPYQIKRTFTTPLPNFK.

Residues 4–264 (YEILGALGKG…VNELLGYSFI (261 aa)) enclose the Protein kinase domain. Residues 10 to 18 (LGKGSFGVV) and lysine 33 contribute to the ATP site. Aspartate 135 serves as the catalytic Proton acceptor. Positions 278–363 (QGLKQMDEDL…SNLSLNCNNS (86 aa)) form a coiled coil.

It belongs to the protein kinase superfamily. NEK Ser/Thr protein kinase family. NIMA subfamily.

It carries out the reaction L-seryl-[protein] + ATP = O-phospho-L-seryl-[protein] + ADP + H(+). The enzyme catalyses L-threonyl-[protein] + ATP = O-phospho-L-threonyl-[protein] + ADP + H(+). Functionally, involved in centrosome biogenesis. Seems to be required for recruitment of centrosomal material and might be involved in de novo centrosome formation. This is Probable serine/threonine-protein kinase nek2 (nek2) from Dictyostelium discoideum (Social amoeba).